The sequence spans 261 residues: Cytochrome c oxidase subunit 3 (261 aa).

Residues 1–15 are Mitochondrial matrix-facing; that stretch reads MTHQTHAYHMVNPSP. A helical membrane pass occupies residues 16-34; sequence WPLTGALSALLMTSGLIMW. Over 35–40 the chain is Mitochondrial intermembrane; it reads FHFNSM. The chain crosses the membrane as a helical span at residues 41–66; it reads YLLMLGLTTNTLTMYQWWRDIVREST. The Mitochondrial matrix portion of the chain corresponds to 67-72; sequence FQGHHT. The chain crosses the membrane as a helical span at residues 73-105; that stretch reads PIVQKGLRYGMILFIVSEVFFFAGFFWAFYHSS. The Mitochondrial intermembrane portion of the chain corresponds to 106–128; sequence LAPTPELGGCWPPTGITPLNPME. A helical membrane pass occupies residues 129–152; that stretch reads VPLLNTSVLLASGVSITWAHHSLM. The Mitochondrial matrix portion of the chain corresponds to 153–155; the sequence is EGN. Residues 156–183 form a helical membrane-spanning segment; it reads RKHMLQALFITISLGIYFTLLQASEYYE. Residues 184-190 are Mitochondrial intermembrane-facing; that stretch reads TPFTISD. A helical membrane pass occupies residues 191-223; sequence GIYGSTFFMATGFHGLHVIIGSTFLIVCFVRQL. The Mitochondrial matrix portion of the chain corresponds to 224 to 232; that stretch reads KFHFTSNHH. Residues 233–256 form a helical membrane-spanning segment; sequence FGFEAAAWYWHFVDVVWLFLYVSI. Over 257–261 the chain is Mitochondrial intermembrane; sequence YWWGS.

It belongs to the cytochrome c oxidase subunit 3 family. Component of the cytochrome c oxidase (complex IV, CIV), a multisubunit enzyme composed of 14 subunits. The complex is composed of a catalytic core of 3 subunits MT-CO1, MT-CO2 and MT-CO3, encoded in the mitochondrial DNA, and 11 supernumerary subunits COX4I, COX5A, COX5B, COX6A, COX6B, COX6C, COX7A, COX7B, COX7C, COX8 and NDUFA4, which are encoded in the nuclear genome. The complex exists as a monomer or a dimer and forms supercomplexes (SCs) in the inner mitochondrial membrane with NADH-ubiquinone oxidoreductase (complex I, CI) and ubiquinol-cytochrome c oxidoreductase (cytochrome b-c1 complex, complex III, CIII), resulting in different assemblies (supercomplex SCI(1)III(2)IV(1) and megacomplex MCI(2)III(2)IV(2)).

The protein localises to the mitochondrion inner membrane. The enzyme catalyses 4 Fe(II)-[cytochrome c] + O2 + 8 H(+)(in) = 4 Fe(III)-[cytochrome c] + 2 H2O + 4 H(+)(out). Component of the cytochrome c oxidase, the last enzyme in the mitochondrial electron transport chain which drives oxidative phosphorylation. The respiratory chain contains 3 multisubunit complexes succinate dehydrogenase (complex II, CII), ubiquinol-cytochrome c oxidoreductase (cytochrome b-c1 complex, complex III, CIII) and cytochrome c oxidase (complex IV, CIV), that cooperate to transfer electrons derived from NADH and succinate to molecular oxygen, creating an electrochemical gradient over the inner membrane that drives transmembrane transport and the ATP synthase. Cytochrome c oxidase is the component of the respiratory chain that catalyzes the reduction of oxygen to water. Electrons originating from reduced cytochrome c in the intermembrane space (IMS) are transferred via the dinuclear copper A center (CU(A)) of subunit 2 and heme A of subunit 1 to the active site in subunit 1, a binuclear center (BNC) formed by heme A3 and copper B (CU(B)). The BNC reduces molecular oxygen to 2 water molecules using 4 electrons from cytochrome c in the IMS and 4 protons from the mitochondrial matrix. The sequence is that of Cytochrome c oxidase subunit 3 (MT-CO3) from Phoca vitulina (Harbor seal).